Here is a 271-residue protein sequence, read N- to C-terminus: Protein PXR1 (271 aa).

2 disordered regions span residues 1–26 (MGLA…NNTS) and 149–233 (KKRP…DSAA). Polar residues predominate over residues 17–26 (RNTTWSNNTS). A G-patch domain is found at 25–71 (TSRFGHKHLEKLGWKPGSGLGLVPDSTTSHIKVSIKDDNLGLGAKLK). Over residues 165–205 (KKTKKVKKEKKVKKVKKEKKEKKEKKDKKEKKVKKEKKEKK) the composition is skewed to basic residues. Residues 206 to 230 (EKKLKDKHSKDTNEITRDQMLKPRD) show a composition bias toward basic and acidic residues.

This sequence belongs to the PINX1 family.

It is found in the nucleus. The protein resides in the nucleolus. Functionally, involved in rRNA-processing at A0, A1 and A2 sites and negatively regulates telomerase. In Kluyveromyces lactis (strain ATCC 8585 / CBS 2359 / DSM 70799 / NBRC 1267 / NRRL Y-1140 / WM37) (Yeast), this protein is Protein PXR1 (PXR1).